Consider the following 69-residue polypeptide: MAAARNLRTALIFGGFISMVGAAFYPIYFRPLLRLEEYQKEQAVNRAGIVQEDVQPPGLKVWSDPFGRK.

The Mitochondrial matrix portion of the chain corresponds to 1–8 (MAAARNLR). A helical transmembrane segment spans residues 9 to 29 (TALIFGGFISMVGAAFYPIYF). Residues 30–69 (RPLLRLEEYQKEQAVNRAGIVQEDVQPPGLKVWSDPFGRK) lie on the Mitochondrial intermembrane side of the membrane. Position 66 is a phenylalanine amide (phenylalanine 66).

Component of the MITRAC (mitochondrial translation regulation assembly intermediate of cytochrome c oxidase complex) complex, the core components of this complex being Coa3/Mitrac12 and Cox14. Interacts with Coa3/Mitrac12 and Cox4i1. Directly interacts with newly synthesized Mt-Co1/Cox1. In terms of tissue distribution, highly expressed in the hypothalamus, substantia nigra reticulata, Edinger-Westphal nucleus, and nucleus of the solitary tract/dorsal motor nucleus of the vagus, the spinal cord, and sensory ganglia (at protein level). Also expressed in the heart, thymus, esophagus, stomach, spleen, lung, pituitary gland, kidney, jejunum, duodenum, ileum, cerebrum, pons, and colon (at protein level). Expressed in preadipocytes and apidocytes (at protein level). Expressed in pancreatic islet cells (at protein level).

The protein localises to the mitochondrion inner membrane. It localises to the secreted. In terms of biological role, component of the MITRAC (mitochondrial translation regulation assembly intermediate of cytochrome c oxidase complex) complex, that regulates cytochrome c oxidase assembly. Promotes the progression of complex assembly after the association of Mt-Co1/Cox11 with Cox4I1 and Cox6c. Chaperone-like assembly factor required to stabilize newly synthesized Mt-Co1/Cox1 and to prevent its premature turnover. Peptide involved in a broad spectrum of regulatory functions. Is a ligand for GPR173. As part of the reproductive cycle, it regulates gonadotropin-releasing hormone (GnRH) signaling in the hypothalamus and pituitary gland which augments the release of luteinizing hormone. More specifically, it regulates the expression of transcription factors CEBPB and POU2F1/OCT1 through the cAMP-PKA signaling pathway, which subsequently regulate the expression of GNRHR and KISS1. Plays a protective role in memory retention through activation of GNRHR. Regulates the secretion of AVP by hypothalamic neurons. Plays a role in the transduction of the itch sensation. Induces anxiolytic effects, reducing behavior associated with anxiety. Regulates food intake as well as satiation and satiety by increasing NUCB2 expression in neurons. In the ovary, it regulates follicular growth by stimulating granulosa cell proliferation by increasing the expression of GPR173, CREB1, CYP19A1, KITLG, FSHR, and LHCGR. It also increases the production of estradiol (E2). In the heart, it regulates contractility and relaxation by activating the AKT1-NOS3 and MAPK1-MAPK3 signaling pathways. It also plays a cardioprotective role during ischemia, where it activates the SAFE and RISK pathways. Stimulates the proliferation and differentiation of preadipocytes. In pancreatic islet cells, it induces proliferation of islet cells as well as the production of INS1 and INS2 through activation of the MAPK1-MAPK3 signaling pathways. This Rattus norvegicus (Rat) protein is Small integral membrane protein 20.